Reading from the N-terminus, the 398-residue chain is Nicotinate phosphoribosyltransferase (398 aa).

Residue His-214 is modified to Phosphohistidine; by autocatalysis.

This sequence belongs to the NAPRTase family. Post-translationally, transiently phosphorylated on a His residue during the reaction cycle. Phosphorylation strongly increases the affinity for substrates and increases the rate of nicotinate D-ribonucleotide production. Dephosphorylation regenerates the low-affinity form of the enzyme, leading to product release.

It catalyses the reaction nicotinate + 5-phospho-alpha-D-ribose 1-diphosphate + ATP + H2O = nicotinate beta-D-ribonucleotide + ADP + phosphate + diphosphate. The protein operates within cofactor biosynthesis; NAD(+) biosynthesis; nicotinate D-ribonucleotide from nicotinate: step 1/1. Its function is as follows. Catalyzes the synthesis of beta-nicotinate D-ribonucleotide from nicotinate and 5-phospho-D-ribose 1-phosphate at the expense of ATP. This is Nicotinate phosphoribosyltransferase from Xanthomonas campestris pv. campestris (strain 8004).